A 271-amino-acid polypeptide reads, in one-letter code: Sec-independent protein translocase protein TatC (271 aa).

5 consecutive transmembrane segments (helical) span residues 24–44 (ISVG…EQIF), 78–98 (FFAG…LFIA), 112–132 (FLFV…YFVF), 159–179 (LVIK…GLLL), and 215–235 (FTQV…IFFG). The disordered stretch occupies residues 247–271 (AAEEAQWAADHNVDDDDVDHPEHKA).

Belongs to the TatC family. As to quaternary structure, the Tat system comprises two distinct complexes: a TatABC complex, containing multiple copies of TatA, TatB and TatC subunits, and a separate TatA complex, containing only TatA subunits. Substrates initially bind to the TatABC complex, which probably triggers association of the separate TatA complex to form the active translocon.

It is found in the cell inner membrane. In terms of biological role, part of the twin-arginine translocation (Tat) system that transports large folded proteins containing a characteristic twin-arginine motif in their signal peptide across membranes. Together with TatB, TatC is part of a receptor directly interacting with Tat signal peptides. The polypeptide is Sec-independent protein translocase protein TatC (Magnetococcus marinus (strain ATCC BAA-1437 / JCM 17883 / MC-1)).